The sequence spans 237 residues: ATP synthase subunit 4, mitochondrial (237 aa).

Residues 1–30 (MFRALTLKASARPVVAGLCSRQAPIAAVRY) constitute a mitochondrion transit peptide.

The protein belongs to the eukaryotic ATPase B chain family.

It is found in the mitochondrion. Its subcellular location is the mitochondrion inner membrane. In terms of biological role, mitochondrial membrane ATP synthase (F(1)F(0) ATP synthase or Complex V) produces ATP from ADP in the presence of a proton gradient across the membrane which is generated by electron transport complexes of the respiratory chain. F-type ATPases consist of two structural domains, F(1) - containing the extramembraneous catalytic core, and F(0) - containing the membrane proton channel, linked together by a central stalk and a peripheral stalk. During catalysis, ATP synthesis in the catalytic domain of F(1) is coupled via a rotary mechanism of the central stalk subunits to proton translocation. Part of the complex F(0) domain and the peripheric stalk, which acts as a stator to hold the catalytic alpha(3)beta(3) subcomplex and subunit a/ATP6 static relative to the rotary elements. This chain is ATP synthase subunit 4, mitochondrial (ATP4), found in Kluyveromyces lactis (strain ATCC 8585 / CBS 2359 / DSM 70799 / NBRC 1267 / NRRL Y-1140 / WM37) (Yeast).